Here is a 250-residue protein sequence, read N- to C-terminus: Small ribosomal subunit protein uS3 (250 aa).

A KH type-2 domain is found at V39 to D107. Positions M215 to E250 are disordered. Over residues A220–E250 the composition is skewed to basic and acidic residues.

Belongs to the universal ribosomal protein uS3 family. Part of the 30S ribosomal subunit. Forms a tight complex with proteins S10 and S14.

Binds the lower part of the 30S subunit head. Binds mRNA in the 70S ribosome, positioning it for translation. The polypeptide is Small ribosomal subunit protein uS3 (Acinetobacter baumannii (strain SDF)).